The sequence spans 730 residues: Translation initiation factor IF-2 (730 aa).

The tract at residues G48–V151 is disordered. Composition is skewed to basic and acidic residues over residues E61–Q77 and N89–A104. Positions K110 to Q123 are enriched in basic residues. A compositionally biased stretch (basic and acidic residues) spans R137–P148. In terms of domain architecture, tr-type G spans E231–K400. Positions G240–T247 are G1. G240–T247 lines the GTP pocket. The tract at residues G265 to H269 is G2. The interval D286–G289 is G3. Residues D286–H290 and N340–D343 contribute to the GTP site. The segment at N340–D343 is G4. The interval S376–L378 is G5.

This sequence belongs to the TRAFAC class translation factor GTPase superfamily. Classic translation factor GTPase family. IF-2 subfamily.

It localises to the cytoplasm. One of the essential components for the initiation of protein synthesis. Protects formylmethionyl-tRNA from spontaneous hydrolysis and promotes its binding to the 30S ribosomal subunits. Also involved in the hydrolysis of GTP during the formation of the 70S ribosomal complex. The sequence is that of Translation initiation factor IF-2 from Halalkalibacterium halodurans (strain ATCC BAA-125 / DSM 18197 / FERM 7344 / JCM 9153 / C-125) (Bacillus halodurans).